The sequence spans 498 residues: ATP synthase subunit beta, chloroplastic (498 aa).

Gly-172–Thr-179 provides a ligand contact to ATP.

Belongs to the ATPase alpha/beta chains family. In terms of assembly, F-type ATPases have 2 components, CF(1) - the catalytic core - and CF(0) - the membrane proton channel. CF(1) has five subunits: alpha(3), beta(3), gamma(1), delta(1), epsilon(1). CF(0) has four main subunits: a(1), b(1), b'(1) and c(9-12).

It localises to the plastid. The protein resides in the chloroplast thylakoid membrane. It carries out the reaction ATP + H2O + 4 H(+)(in) = ADP + phosphate + 5 H(+)(out). In terms of biological role, produces ATP from ADP in the presence of a proton gradient across the membrane. The catalytic sites are hosted primarily by the beta subunits. The polypeptide is ATP synthase subunit beta, chloroplastic (Elaeis oleifera (American oil palm)).